Consider the following 195-residue polypeptide: CDP-diacylglycerol--glycerol-3-phosphate 3-phosphatidyltransferase (195 aa).

Helical transmembrane passes span 7 to 24 (ITVLRVLLIPIFILLFYL), 60 to 81 (FGAFLDPVADKLMVAVALVLLV), 134 to 150 (MLALVILLANPPAFTFW), and 157 to 173 (FLLIAGGLTLWSMLQYL).

Belongs to the CDP-alcohol phosphatidyltransferase class-I family.

It localises to the cell membrane. The enzyme catalyses a CDP-1,2-diacyl-sn-glycerol + sn-glycerol 3-phosphate = a 1,2-diacyl-sn-glycero-3-phospho-(1'-sn-glycero-3'-phosphate) + CMP + H(+). It participates in phospholipid metabolism; phosphatidylglycerol biosynthesis; phosphatidylglycerol from CDP-diacylglycerol: step 1/2. In terms of biological role, this protein catalyzes the committed step to the synthesis of the acidic phospholipids. The chain is CDP-diacylglycerol--glycerol-3-phosphate 3-phosphatidyltransferase (pgsA) from Pseudomonas fluorescens.